Here is a 280-residue protein sequence, read N- to C-terminus: Nucleotide-binding protein Mfla_0145 (280 aa).

ATP is bound at residue 8-15; the sequence is GLSGSGKS. 57–60 is a GTP binding site; that stretch reads DTRS.

It belongs to the RapZ-like family.

Displays ATPase and GTPase activities. This is Nucleotide-binding protein Mfla_0145 from Methylobacillus flagellatus (strain ATCC 51484 / DSM 6875 / VKM B-1610 / KT).